The sequence spans 827 residues: Probable inorganic carbon transporter subunit DabA2 (827 aa).

Positions 351, 353, 524, and 539 each coordinate Zn(2+).

Belongs to the inorganic carbon transporter (TC 9.A.2) DabA family. In terms of assembly, forms a complex with DabB2, possibly a heterodimer. Zn(2+) is required as a cofactor.

The protein resides in the cell inner membrane. Uptake of inorganic carbon by cells in the presence of thiosulphate is fully inhibited by the uncouplers carbonyl cyanide m-chlorophenyl hydrazone (CCCP), carbonyl cyanide p-trifluoromethoxyphenyl hydrazone (FCCP), S13 or SF6847. Not inhibited by the ATPase inhibitor N,N-dicyclohexylcarbodiimide (DCCD). Inorganic carbon uptake is inhibited by the ionophore CCCP, suggesting uptake is coupled to a cation gradient. Its function is as follows. Part of an energy-coupled inorganic carbon pump; its substrate may be carbon dioxide. Expression of both dabA2 and dabB2 (DAB2) restores growth in ambient air to E.coli deleted of its carbonic anhydrase genes (called CAfree, deletion of 'can' and 'cynT'); neither dabA2 or dabB2 alone is sufficient. Rescue is pH-independent, suggesting it transports CO(2) and not carbonate ions. Together the genes allow greater than normal uptake of inorganic carbon by E.coli. Uptake of carbon dioxide rather than bicarbonate has been suggested based on kinetic calculations. The chain is Probable inorganic carbon transporter subunit DabA2 from Halothiobacillus neapolitanus (strain ATCC 23641 / c2) (Thiobacillus neapolitanus).